The sequence spans 892 residues: UPF0182 protein MCA2716 (892 aa).

The next 7 membrane-spanning stretches (helical) occupy residues 7-27, 57-77, 107-127, 163-183, 206-226, 252-272, and 281-301; these read LLTS…AIVL, ILSG…FWAA, GALP…ALPF, ILVL…VMVA, IHLN…YVLQ, LPLI…ALWF, and LALT…IDVV.

This sequence belongs to the UPF0182 family.

The protein resides in the cell membrane. In Methylococcus capsulatus (strain ATCC 33009 / NCIMB 11132 / Bath), this protein is UPF0182 protein MCA2716.